We begin with the raw amino-acid sequence, 323 residues long: MSFASETKKELTHMDVSDSDAKVELAAFIRMNGAISFSNQLVIMDVQTENAAIARRMYQLLKDLYEVPIELLVRRKMKLKKNNVYIVRLKSGTRGILEDLRILEPPMTFTKSIDRGFVKKRSAKRAYLRGAFLASGSVNNPETSSYHLEIFSVYEEHNEAICALMNQFDLNARTLERKNGFITYLKEAEKITEFLSIIGATSALLHFEDVRIMRDMRNSVNRLVNCETANLNKTINAAVRQIDNIKYIQSTVGLEALPERLREIAALRIANEDVTLKELGEMLTTGQVSKSGINHRLRKLDQIAERLRSGETPSQVGLKVSNS.

Positions 275–309 (TLKELGEMLTTGQVSKSGINHRLRKLDQIAERLRS) form a DNA-binding region, H-T-H motif.

It belongs to the WhiA family.

Its function is as follows. Involved in cell division and chromosome segregation. This Listeria welshimeri serovar 6b (strain ATCC 35897 / DSM 20650 / CCUG 15529 / CIP 8149 / NCTC 11857 / SLCC 5334 / V8) protein is Probable cell division protein WhiA.